The chain runs to 246 residues: Proteasome subunit alpha type-6-B (246 aa).

The protein belongs to the peptidase T1A family. In terms of assembly, component of the 20S core complex of the 26S proteasome. The 26S proteasome is composed of a core protease (CP), known as the 20S proteasome, capped at one or both ends by the 19S regulatory particle (RP/PA700). The 20S proteasome core is composed of 28 subunits that are arranged in four stacked rings, resulting in a barrel-shaped structure. The two end rings are each formed by seven alpha subunits, and the two central rings are each formed by seven beta subunits. The catalytic chamber with the active sites is on the inside of the barrel.

The protein resides in the cytoplasm. The protein localises to the nucleus. Functionally, the proteasome is a multicatalytic proteinase complex which is characterized by its ability to cleave peptides with Arg, Phe, Tyr, Leu, and Glu adjacent to the leaving group at neutral or slightly basic pH. The proteasome has an ATP-dependent proteolytic activity. This chain is Proteasome subunit alpha type-6-B (PAA2), found in Arabidopsis thaliana (Mouse-ear cress).